Here is a 156-residue protein sequence, read N- to C-terminus: Small ribosomal subunit protein uS7 (156 aa).

This sequence belongs to the universal ribosomal protein uS7 family. Part of the 30S ribosomal subunit. Contacts proteins S9 and S11.

Functionally, one of the primary rRNA binding proteins, it binds directly to 16S rRNA where it nucleates assembly of the head domain of the 30S subunit. Is located at the subunit interface close to the decoding center, probably blocks exit of the E-site tRNA. In Brevibacillus brevis (strain 47 / JCM 6285 / NBRC 100599), this protein is Small ribosomal subunit protein uS7.